We begin with the raw amino-acid sequence, 267 residues long: Thiamine pyrophosphokinase 3 (267 aa).

The protein belongs to the thiamine pyrophosphokinase family.

The protein resides in the cytoplasm. It is found in the cytosol. The catalysed reaction is thiamine + ATP = thiamine diphosphate + AMP + H(+). It participates in cofactor biosynthesis; thiamine diphosphate biosynthesis; thiamine diphosphate from thiamine: step 1/1. Catalyzes the phosphorylation of thiamine to thiamine pyrophosphate (TPP). TPP is an active cofactor for enzymes involved in glycolysis and energy production. Plant leaves require high levels of TPP for photosynthesis and carbohydrate metabolism. This chain is Thiamine pyrophosphokinase 3 (TPK3), found in Oryza sativa subsp. japonica (Rice).